The primary structure comprises 142 residues: Putative pre-16S rRNA nuclease (142 aa).

The protein belongs to the YqgF nuclease family.

It is found in the cytoplasm. Functionally, could be a nuclease involved in processing of the 5'-end of pre-16S rRNA. The protein is Putative pre-16S rRNA nuclease of Saccharophagus degradans (strain 2-40 / ATCC 43961 / DSM 17024).